The sequence spans 366 residues: Chorismate synthase (366 aa).

Arg-48 and Arg-54 together coordinate NADP(+). FMN contacts are provided by residues 125–127 (RSS), 238–239 (NA), Gly-278, 293–297 (KPTSS), and Arg-319.

The protein belongs to the chorismate synthase family. As to quaternary structure, homotetramer. Requires FMNH2 as cofactor.

The catalysed reaction is 5-O-(1-carboxyvinyl)-3-phosphoshikimate = chorismate + phosphate. The protein operates within metabolic intermediate biosynthesis; chorismate biosynthesis; chorismate from D-erythrose 4-phosphate and phosphoenolpyruvate: step 7/7. In terms of biological role, catalyzes the anti-1,4-elimination of the C-3 phosphate and the C-6 proR hydrogen from 5-enolpyruvylshikimate-3-phosphate (EPSP) to yield chorismate, which is the branch point compound that serves as the starting substrate for the three terminal pathways of aromatic amino acid biosynthesis. This reaction introduces a second double bond into the aromatic ring system. This Herminiimonas arsenicoxydans protein is Chorismate synthase.